The following is a 367-amino-acid chain: Phosphoribosylaminoimidazole-succinocarboxamide synthase (367 aa).

Belongs to the SAICAR synthetase family.

The catalysed reaction is 5-amino-1-(5-phospho-D-ribosyl)imidazole-4-carboxylate + L-aspartate + ATP = (2S)-2-[5-amino-1-(5-phospho-beta-D-ribosyl)imidazole-4-carboxamido]succinate + ADP + phosphate + 2 H(+). It participates in purine metabolism; IMP biosynthesis via de novo pathway; 5-amino-1-(5-phospho-D-ribosyl)imidazole-4-carboxamide from 5-amino-1-(5-phospho-D-ribosyl)imidazole-4-carboxylate: step 1/2. The chain is Phosphoribosylaminoimidazole-succinocarboxamide synthase from Aliivibrio fischeri (strain ATCC 700601 / ES114) (Vibrio fischeri).